The following is a 505-amino-acid chain: Glycerol kinase (505 aa).

Thr14 is an ADP binding site. Residues Thr14, Thr15, and Ser16 each coordinate ATP. Thr14 lines the sn-glycerol 3-phosphate pocket. Arg18 is an ADP binding site. 4 residues coordinate sn-glycerol 3-phosphate: Arg84, Glu85, Tyr136, and Asp246. Residues Arg84, Glu85, Tyr136, Asp246, and Gln247 each coordinate glycerol. The ADP site is built by Thr268 and Gly311. Positions 268, 311, 315, and 412 each coordinate ATP. Gly412 and Asn416 together coordinate ADP.

This sequence belongs to the FGGY kinase family.

It catalyses the reaction glycerol + ATP = sn-glycerol 3-phosphate + ADP + H(+). Its pathway is polyol metabolism; glycerol degradation via glycerol kinase pathway; sn-glycerol 3-phosphate from glycerol: step 1/1. With respect to regulation, inhibited by fructose 1,6-bisphosphate (FBP). Functionally, key enzyme in the regulation of glycerol uptake and metabolism. Catalyzes the phosphorylation of glycerol to yield sn-glycerol 3-phosphate. The polypeptide is Glycerol kinase (Vibrio cholerae serotype O1 (strain ATCC 39315 / El Tor Inaba N16961)).